The chain runs to 356 residues: Poly(rC)-binding protein 1 (356 aa).

Met1 is modified (N-acetylmethionine). 2 consecutive KH domains span residues 13–75 (TLTI…FAMI) and 97–162 (PVTL…VKQI). Lys115 is covalently cross-linked (Glycyl lysine isopeptide (Lys-Gly) (interchain with G-Cter in SUMO2)). Residues Ser173, Ser189, Ser190, Ser246, Ser264, and Ser273 each carry the phosphoserine modification. Positions 279–343 (QTTHELTIPN…ASISLAQYLI (65 aa)) constitute a KH 3 domain.

Phosphorylated; lowers poly(rC)-binding activity.

The protein resides in the nucleus. It is found in the cytoplasm. Single-stranded nucleic acid binding protein that binds preferentially to oligo dC. Together with PCBP2, required for erythropoiesis, possibly by regulating mRNA splicing. This Bos taurus (Bovine) protein is Poly(rC)-binding protein 1 (PCBP1).